The sequence spans 377 residues: Probable transposase for insertion sequence element IS5377 (377 aa).

Belongs to the transposase 11 family.

In Geobacillus stearothermophilus (Bacillus stearothermophilus), this protein is Probable transposase for insertion sequence element IS5377.